The primary structure comprises 144 residues: Large ribosomal subunit protein uL16 (144 aa).

Belongs to the universal ribosomal protein uL16 family. Part of the 50S ribosomal subunit.

Its function is as follows. Binds 23S rRNA and is also seen to make contacts with the A and possibly P site tRNAs. The polypeptide is Large ribosomal subunit protein uL16 (Bacillus mycoides (strain KBAB4) (Bacillus weihenstephanensis)).